Here is a 92-residue protein sequence, read N- to C-terminus: Small ribosomal subunit protein uS19 (92 aa).

The protein belongs to the universal ribosomal protein uS19 family.

Functionally, protein S19 forms a complex with S13 that binds strongly to the 16S ribosomal RNA. The polypeptide is Small ribosomal subunit protein uS19 (Acidiphilium cryptum (strain JF-5)).